The sequence spans 185 residues: Ribosome-recycling factor (185 aa).

Belongs to the RRF family.

It is found in the cytoplasm. Responsible for the release of ribosomes from messenger RNA at the termination of protein biosynthesis. May increase the efficiency of translation by recycling ribosomes from one round of translation to another. This Clostridium beijerinckii (strain ATCC 51743 / NCIMB 8052) (Clostridium acetobutylicum) protein is Ribosome-recycling factor.